The following is a 259-amino-acid chain: Trypsin (259 aa).

Residues 1-32 (MKHFLRALKRCSVAVATVAIAVVGLQPVTASA) form the signal peptide. Positions 33 to 36 (APNP) are cleaved as a propeptide — activation peptide. The region spanning 37–257 (VVGGTRAAQG…FASAIASAAR (221 aa)) is the Peptidase S1 domain. C58 and C74 are oxidised to a cystine. Residues H73 and D118 each act as charge relay system in the active site. 2 cysteine pairs are disulfide-bonded: C177–C192 and C204–C233. Residue S208 is the Charge relay system of the active site.

The protein belongs to the peptidase S1 family.

The catalysed reaction is Preferential cleavage: Arg-|-Xaa, Lys-|-Xaa.. This Streptomyces griseus protein is Trypsin (sprT).